We begin with the raw amino-acid sequence, 187 residues long: Putative glutathione-dependent formaldehyde-activating enzyme (187 aa).

Residues 20–166 enclose the CENP-V/GFA domain; the sequence is FQGGVLKCKC…FESLGLESYD (147 aa). Residues C27, C29, C48, C50, C53, C95, and C98 each coordinate Zn(2+).

It belongs to the Gfa family. Zn(2+) is required as a cofactor.

It catalyses the reaction S-(hydroxymethyl)glutathione = glutathione + formaldehyde. It functions in the pathway one-carbon metabolism; formaldehyde degradation; formate from formaldehyde (glutathione route): step 1/3. Functionally, catalyzes the condensation of formaldehyde and glutathione to S-hydroxymethylglutathione. This chain is Putative glutathione-dependent formaldehyde-activating enzyme, found in Verticillium alfalfae (strain VaMs.102 / ATCC MYA-4576 / FGSC 10136) (Verticillium wilt of alfalfa).